Reading from the N-terminus, the 328-residue chain is N-acetyl-gamma-glutamyl-phosphate reductase (328 aa).

The active site involves C143.

It belongs to the NAGSA dehydrogenase family. Type 1 subfamily.

It localises to the cytoplasm. It catalyses the reaction N-acetyl-L-glutamate 5-semialdehyde + phosphate + NADP(+) = N-acetyl-L-glutamyl 5-phosphate + NADPH + H(+). It participates in amino-acid biosynthesis; L-arginine biosynthesis; N(2)-acetyl-L-ornithine from L-glutamate: step 3/4. Its function is as follows. Catalyzes the NADPH-dependent reduction of N-acetyl-5-glutamyl phosphate to yield N-acetyl-L-glutamate 5-semialdehyde. This Methanosphaerula palustris (strain ATCC BAA-1556 / DSM 19958 / E1-9c) protein is N-acetyl-gamma-glutamyl-phosphate reductase.